A 498-amino-acid chain; its full sequence is NADH-quinone oxidoreductase subunit N (498 aa).

The next 14 membrane-spanning stretches (helical) occupy residues 10-30, 44-64, 68-88, 109-129, 130-150, 164-184, 207-227, 239-259, 273-293, 301-321, 328-348, 377-397, 412-434, and 458-478; these read LMPL…MLLI, VVGL…GKFV, VMGM…ILVA, ELYL…ASSH, YASF…LLAY, YLVL…YIYA, VLLG…LAPF, PAPM…GLFV, LVTV…LLAV, ILGY…ISMT, VTVY…AVAL, ATLT…GFIG, FLAA…VMVV, and LMVL…DPMI.

Belongs to the complex I subunit 2 family. In terms of assembly, NDH-1 is composed of 14 different subunits. Subunits NuoA, H, J, K, L, M, N constitute the membrane sector of the complex.

The protein localises to the cell inner membrane. It catalyses the reaction a quinone + NADH + 5 H(+)(in) = a quinol + NAD(+) + 4 H(+)(out). In terms of biological role, NDH-1 shuttles electrons from NADH, via FMN and iron-sulfur (Fe-S) centers, to quinones in the respiratory chain. The immediate electron acceptor for the enzyme in this species is believed to be ubiquinone. Couples the redox reaction to proton translocation (for every two electrons transferred, four hydrogen ions are translocated across the cytoplasmic membrane), and thus conserves the redox energy in a proton gradient. This is NADH-quinone oxidoreductase subunit N from Acinetobacter baumannii (strain AB0057).